Consider the following 513-residue polypeptide: Maturase K (513 aa).

This sequence belongs to the intron maturase 2 family. MatK subfamily.

The protein resides in the plastid. It localises to the chloroplast. Functionally, usually encoded in the trnK tRNA gene intron. Probably assists in splicing its own and other chloroplast group II introns. This chain is Maturase K, found in Sporobolus indicus (Smut grass).